A 384-amino-acid chain; its full sequence is Cell division protein FtsZ (384 aa).

GTP contacts are provided by residues 20–24 (GGGGN), 107–109 (GTG), glutamate 138, arginine 142, and asparagine 186.

It belongs to the FtsZ family. As to quaternary structure, homodimer. Polymerizes to form a dynamic ring structure in a strictly GTP-dependent manner. Interacts directly with several other division proteins.

The protein localises to the cytoplasm. Essential cell division protein that forms a contractile ring structure (Z ring) at the future cell division site. The regulation of the ring assembly controls the timing and the location of cell division. One of the functions of the FtsZ ring is to recruit other cell division proteins to the septum to produce a new cell wall between the dividing cells. Binds GTP and shows GTPase activity. The protein is Cell division protein FtsZ of Buchnera aphidicola subsp. Schizaphis graminum (strain Sg).